The following is a 793-amino-acid chain: RNA-binding protein spenito (793 aa).

Disordered regions lie at residues 1–93 and 243–296; these read MSSH…PPAE and HHDY…KKDK. Over residues 25–42 the composition is skewed to low complexity; it reads SRSPGPASRSSLSRNSRS. Basic residues predominate over residues 257 to 268; sequence RGGHPHHLHGHA. Over residues 285 to 296 the composition is skewed to basic and acidic residues; it reads APYEKPESKKDK. RRM domains follow at residues 314–391 and 395–469; these read RTLF…YGKV and TRMW…FAEL. The segment at 507–623 is disordered; that stretch reads YAPRGGYSPY…RNDALASAST (117 aa). Residues 526–536 show a composition bias toward basic residues; the sequence is GGYRGRGRGMY. Residues 566 to 593 are compositionally biased toward basic and acidic residues; that stretch reads DEWRRPPGESYDRGARSSSREPGVERSR. One can recognise an SPOC domain in the interval 624-791; it reads VPDVARKCST…HLVIVVVRGG (168 aa).

Belongs to the RRM Spen family. In terms of assembly, component of the WMM complex, a N6-methyltransferase complex composed of a catalytic subcomplex, named MAC, and of an associated subcomplex, named MACOM. The MAC subcomplex is composed of Ime4/Mettl3 and Mettl14. The MACOM subcomplex is composed of fl(2)d, Flacc/Xio, Hakai, vir, and, in some cases of nito. Interacts with Sxl. Interacts with Hipk; leading to phosphorylation. Phosphorylated by Hipk at Ser-23, Ser-25 and/or Ser-27; the precise position if phosphorylation sites is unknown. Widely expressed. Shows some enrichment in the central nervous system.

Its subcellular location is the nucleus. Its function is as follows. RNA-binding protein that acts as an associated component of the WMM complex, a complex that mediates N6-methyladenosine (m6A) methylation of mRNAs. M6a modification plays a role in the efficiency of mRNA splicing and is required for sex determination. In the WMM complex, may act by binding target RNAs and recruiting the WMM complex. Required for sex determination and dosage compensation via Sxl alternative splicing: m6A methylation acts as a key regulator of Sxl pre-mRNA and promotes female-specific alternative splicing of Sxl, which determines female physiognomy. M6A methylation is also required for neuronal functions. Acts as a positive regulator of canonical Wg signaling during wing disk and eye development. This is RNA-binding protein spenito from Drosophila melanogaster (Fruit fly).